Consider the following 346-residue polypeptide: Patr class I histocompatibility antigen, CH28 alpha chain (346 aa).

Residues 1–21 (MAPRSLLLLFSGALALTETWA) form the signal peptide. Residues 22–111 (GSHSLRYFST…LLRRYNQSEA (90 aa)) are alpha-1. Residues 22-305 (GSHSLRYFST…EQSPQPTIPI (284 aa)) are Extracellular-facing. The N-linked (GlcNAc...) asparagine glycan is linked to N107. The alpha-2 stretch occupies residues 112 to 203 (GSHTLQGMNG…ENGKETLQRA (92 aa)). 2 disulfide bridges follow: C122–C185 and C224–C280. Residues 204-295 (DPPKAHIAHH…GLPQPLTLRW (92 aa)) form an alpha-3 region. Residues 206-294 (PKAHIAHHPI…EGLPQPLTLR (89 aa)) enclose the Ig-like C1-type domain. Residues 296–305 (EQSPQPTIPI) are connecting peptide. A helical membrane pass occupies residues 306–329 (VGIVAGLVVLGAVVTGAVVAAVMW). Topologically, residues 330–346 (RKKSSDRNRGSYSQAAV) are cytoplasmic.

This sequence belongs to the MHC class I family. In terms of assembly, heterodimer of an alpha chain and a beta chain (beta-2-microglobulin).

The protein resides in the membrane. In terms of biological role, involved in the presentation of foreign antigens to the immune system. This is Patr class I histocompatibility antigen, CH28 alpha chain from Pan troglodytes (Chimpanzee).